The primary structure comprises 261 residues: Kallikrein 1-related peptidase b9 (261 aa).

The first 18 residues, 1–18 (MRFLILFLALSLGGIDAA), serve as a signal peptide directing secretion. The propeptide at 19-24 (PPVHSR) is activation peptide. The Peptidase S1 domain occupies 25-258 (IVGGFKCEKN…FTSWIKDTMA (234 aa)). 5 cysteine pairs are disulfide-bonded: C31–C173, C50–C66, C152–C219, C184–C198, and C209–C234. H65 functions as the Charge relay system in the catalytic mechanism. N-linked (GlcNAc...) asparagine glycosylation occurs at N102. Catalysis depends on D120, which acts as the Charge relay system. S213 functions as the Charge relay system in the catalytic mechanism.

Belongs to the peptidase S1 family. Kallikrein subfamily.

The enzyme catalyses Preferential cleavage of Arg-|-Xaa bonds in small molecule substrates. Highly selective action to release kallidin (lysyl-bradykinin) from kininogen involves hydrolysis of Met-|-Xaa or Leu-|-Xaa.. Its function is as follows. Glandular kallikreins cleave Met-Lys and Arg-Ser bonds in kininogen to release Lys-bradykinin. This is Kallikrein 1-related peptidase b9 (Klk1b9) from Mus musculus (Mouse).